The sequence spans 268 residues: Small ribosomal subunit protein uS2 (268 aa).

The protein belongs to the universal ribosomal protein uS2 family.

In Coprothermobacter proteolyticus (strain ATCC 35245 / DSM 5265 / OCM 4 / BT), this protein is Small ribosomal subunit protein uS2.